We begin with the raw amino-acid sequence, 24 residues long: Coenzyme PQQ synthesis protein A (24 aa).

The segment at residues 16-20 (EVTMY) is a cross-link (pyrroloquinoline quinone (Glu-Tyr)).

This sequence belongs to the PqqA family.

It participates in cofactor biosynthesis; pyrroloquinoline quinone biosynthesis. In terms of biological role, required for coenzyme pyrroloquinoline quinone (PQQ) biosynthesis. PQQ is probably formed by cross-linking a specific glutamate to a specific tyrosine residue and excising these residues from the peptide. The protein is Coenzyme PQQ synthesis protein A of Methylococcus capsulatus (strain ATCC 33009 / NCIMB 11132 / Bath).